A 366-amino-acid chain; its full sequence is Probable dual-specificity RNA methyltransferase RlmN (366 aa).

Catalysis depends on glutamate 108, which acts as the Proton acceptor. The 239-residue stretch at 114–352 (YSDRSTLCIS…CTVRDTKGQE (239 aa)) folds into the Radical SAM core domain. Cysteines 121 and 357 form a disulfide. [4Fe-4S] cluster is bound by residues cysteine 128, cysteine 132, and cysteine 135. S-adenosyl-L-methionine is bound by residues 178–179 (GE), serine 212, 235–237 (SLH), and asparagine 314. Cysteine 357 (S-methylcysteine intermediate) is an active-site residue.

This sequence belongs to the radical SAM superfamily. RlmN family. It depends on [4Fe-4S] cluster as a cofactor.

It localises to the cytoplasm. The catalysed reaction is adenosine(2503) in 23S rRNA + 2 reduced [2Fe-2S]-[ferredoxin] + 2 S-adenosyl-L-methionine = 2-methyladenosine(2503) in 23S rRNA + 5'-deoxyadenosine + L-methionine + 2 oxidized [2Fe-2S]-[ferredoxin] + S-adenosyl-L-homocysteine. The enzyme catalyses adenosine(37) in tRNA + 2 reduced [2Fe-2S]-[ferredoxin] + 2 S-adenosyl-L-methionine = 2-methyladenosine(37) in tRNA + 5'-deoxyadenosine + L-methionine + 2 oxidized [2Fe-2S]-[ferredoxin] + S-adenosyl-L-homocysteine. In terms of biological role, specifically methylates position 2 of adenine 2503 in 23S rRNA and position 2 of adenine 37 in tRNAs. The chain is Probable dual-specificity RNA methyltransferase RlmN from Corynebacterium glutamicum (strain ATCC 13032 / DSM 20300 / JCM 1318 / BCRC 11384 / CCUG 27702 / LMG 3730 / NBRC 12168 / NCIMB 10025 / NRRL B-2784 / 534).